An 803-amino-acid polypeptide reads, in one-letter code: Homeobox protein Wariai (803 aa).

The span at 23-41 (SDYDSYEQQYNNPTGSKQY) shows a compositional bias: polar residues. Residues 23–144 (SDYDSYEQQY…PTPYSSNSFS (122 aa)) form a disordered region. Residues 42 to 124 (NNNNNNNTNT…NNNNNNNNNN (83 aa)) are compositionally biased toward low complexity. A compositionally biased stretch (polar residues) spans 125-138 (QHLSQSQQLSPTPY). The segment at residues 162–221 (SKKKRKRTSPDQLKLLEKIFMAHQHPNLNLRSQLAVELHMTARSVQIWFQNRRAKARNME) is a DNA-binding region (homeobox). The disordered stretch occupies residues 288–330 (INGNMGGGGGGGGGSHNHHHHNHNHNHHNHNHNHNHNQPLSNG). Residues 291-302 (NMGGGGGGGGGS) are compositionally biased toward gly residues. Residues 303 to 322 (HNHHHHNHNHNHHNHNHNHN) are compositionally biased toward basic residues. ANK repeat units lie at residues 374 to 403 (KGLSLLFTAAFLGYEYQVRRLIESGANPNI), 407 to 436 (QGNTPLIAASVLGNQPIVELLLEHRADPNL), 440 to 469 (EGVSPLFSACKGGHLQIASSLLDHDAEVSV), 474 to 503 (NGETPLHIASLKGFEKICKLLIETEAKASV), 507 to 536 (NNRTPLHHACIMGYFSIAKLLICNGADMNA), 540 to 569 (DGHTPLHTSSLMGHDLITRLLLENGADPNI), 573 to 602 (EGYTPIHYAVRESRIETVKFLIKFNSKLNI), 606 to 636 (NGQNLIHLSVQFASLMMGQMIFESKGCEIAA), and 642 to 671 (QGYTPLYLAAKAGKTNFVKYLLSKGASKKI). The disordered stretch occupies residues 695–760 (KSSNNNNSNS…PPGNKFEEDD (66 aa)). The span at 696–746 (SSNNNNSNSNINNINNINNINNINSQPNTNSDNNNNNNNNNFNENYSNGNN) shows a compositional bias: low complexity.

It is found in the nucleus. Its function is as follows. Putative transcription factor, that seems to be involved in anterior-posterior patterning of the slug, probably by controlling the proportions of prestalk and prespore cells. This is Homeobox protein Wariai (warA) from Dictyostelium discoideum (Social amoeba).